The following is a 291-amino-acid chain: Filament protein FIN1 (291 aa).

S54 is modified (phosphoserine). Phosphothreonine is present on T68. 2 positions are modified to phosphoserine: S74 and S88. Positions 254–284 (VELKEIKDLLLQMLRRQREIESRLSNIELQL) form a coiled coil.

Homooligomer; in vitro, FIN1 self-assembles into 10 nm diameter filaments. Interacts with the 14-3-3 proteins BMH1 and BMH2, and the protein phosphatase 1 complex catalytic subunit GLC7. In terms of processing, phosphorylated by CDC28. Phosphorylation is required for BMH1 and BMH2 interaction. Dephosphorylation by GLC7 depends on the presence of BMH1 and BMH2.

It is found in the nucleus. It localises to the cytoplasm. Its subcellular location is the cytoskeleton. The protein resides in the spindle pole. Its function is as follows. Forms cell-cycle specific filaments between the spindle pole bodies of dividing yeast cells. This Saccharomyces cerevisiae (strain ATCC 204508 / S288c) (Baker's yeast) protein is Filament protein FIN1 (FIN1).